Reading from the N-terminus, the 466-residue chain is 3-isopropylmalate dehydratase large subunit (466 aa).

The [4Fe-4S] cluster site is built by C347, C407, and C410.

This sequence belongs to the aconitase/IPM isomerase family. LeuC type 1 subfamily. Heterodimer of LeuC and LeuD. [4Fe-4S] cluster is required as a cofactor.

It carries out the reaction (2R,3S)-3-isopropylmalate = (2S)-2-isopropylmalate. Its pathway is amino-acid biosynthesis; L-leucine biosynthesis; L-leucine from 3-methyl-2-oxobutanoate: step 2/4. Its function is as follows. Catalyzes the isomerization between 2-isopropylmalate and 3-isopropylmalate, via the formation of 2-isopropylmaleate. In Escherichia coli O45:K1 (strain S88 / ExPEC), this protein is 3-isopropylmalate dehydratase large subunit.